Reading from the N-terminus, the 385-residue chain is Probable di-N-acetylchitobiase 2 (385 aa).

The first 15 residues, 1–15, serve as a signal peptide directing secretion; the sequence is MRIILLLFLIVFVVA. Positions 16 to 377 constitute a GH18 domain; it reads QSSSSSSSSG…DALASFFPQS (362 aa). Asn-51 and Asn-101 each carry an N-linked (GlcNAc...) asparagine glycan. Catalysis depends on Glu-129, which acts as the Proton donor. N-linked (GlcNAc...) asparagine glycosylation is found at Asn-223, Asn-272, and Asn-296.

Belongs to the glycosyl hydrolase 18 family.

It localises to the lysosome. Its function is as follows. Involved in the degradation of asparagine-linked glycoproteins. May hydrolyze of N-acetyl-beta-D-glucosamine (1-4)N-acetylglucosamine chitobiose core from the reducing end of the bond. This is Probable di-N-acetylchitobiase 2 (ctbs2) from Dictyostelium discoideum (Social amoeba).